Consider the following 316-residue polypeptide: Acetyl-coenzyme A carboxylase carboxyl transferase subunit alpha (316 aa).

The CoA carboxyltransferase C-terminal domain occupies 39–293; the sequence is KLEEKNAQLT…KKHLQANLTN (255 aa).

It belongs to the AccA family. In terms of assembly, acetyl-CoA carboxylase is a heterohexamer composed of biotin carboxyl carrier protein (AccB), biotin carboxylase (AccC) and two subunits each of ACCase subunit alpha (AccA) and ACCase subunit beta (AccD).

Its subcellular location is the cytoplasm. The catalysed reaction is N(6)-carboxybiotinyl-L-lysyl-[protein] + acetyl-CoA = N(6)-biotinyl-L-lysyl-[protein] + malonyl-CoA. The protein operates within lipid metabolism; malonyl-CoA biosynthesis; malonyl-CoA from acetyl-CoA: step 1/1. Functionally, component of the acetyl coenzyme A carboxylase (ACC) complex. First, biotin carboxylase catalyzes the carboxylation of biotin on its carrier protein (BCCP) and then the CO(2) group is transferred by the carboxyltransferase to acetyl-CoA to form malonyl-CoA. The protein is Acetyl-coenzyme A carboxylase carboxyl transferase subunit alpha of Coxiella burnetii (strain RSA 331 / Henzerling II).